The chain runs to 88 residues: Mitochondrial import inner membrane translocase subunit Tim10 (88 aa).

The short motif at Cys-29 to Cys-54 is the Twin CX3C motif element. Disulfide bonds link Cys-29–Cys-54 and Cys-33–Cys-50.

Belongs to the small Tim family. As to quaternary structure, heterohexamer; composed of 3 copies of TIMM9 and 3 copies of TIMM10/TIM10A, named soluble 70 kDa complex. The complex forms a 6-bladed alpha-propeller structure and associates with the TIMM22 component of the TIM22 complex. Interacts with multi-pass transmembrane proteins in transit.

Its subcellular location is the mitochondrion inner membrane. Its function is as follows. Mitochondrial intermembrane chaperone that participates in the import and insertion of multi-pass transmembrane proteins into the mitochondrial inner membrane. May also be required for the transfer of beta-barrel precursors from the TOM complex to the sorting and assembly machinery (SAM complex) of the outer membrane. Acts as a chaperone-like protein that protects the hydrophobic precursors from aggregation and guide them through the mitochondrial intermembrane space. The protein is Mitochondrial import inner membrane translocase subunit Tim10 (timm10) of Danio rerio (Zebrafish).